Consider the following 773-residue polypeptide: Polyribonucleotide nucleotidyltransferase (773 aa).

The Mg(2+) site is built by D532 and D538. Residues 598–657 form the KH domain; the sequence is PRVITIKVPVDKIGEVIGPKGKVINAITEETGAQISIEDDGTVFVGATDGLSAQAAINKI. Residues 669–738 enclose the S1 motif domain; that stretch reads GERFLGTVVK…KRGKISLVLV (70 aa). Positions 749 to 773 are disordered; the sequence is APADAGAAQEFGSGTAPADAATASS.

Belongs to the polyribonucleotide nucleotidyltransferase family. It depends on Mg(2+) as a cofactor.

Its subcellular location is the cytoplasm. The enzyme catalyses RNA(n+1) + phosphate = RNA(n) + a ribonucleoside 5'-diphosphate. Involved in mRNA degradation. Catalyzes the phosphorolysis of single-stranded polyribonucleotides processively in the 3'- to 5'-direction. This is Polyribonucleotide nucleotidyltransferase from Mycobacterium leprae (strain Br4923).